We begin with the raw amino-acid sequence, 646 residues long: Vitamin K-dependent protein S (646 aa).

Positions 1–12 (GHASQVLVRKRR) are excised as a propeptide. A Gla domain is found at 13 to 58 (ANSMLEETKKGNLERECIEELCNKEEAREVFENDPETDYFYPKYLG). 11 positions are modified to 4-carboxyglutamate: Glu18, Glu19, Glu26, Glu28, Glu31, Glu32, Glu37, Glu38, Glu41, Glu44, and Glu48. Residues Cys29 and Cys34 are joined by a disulfide bond. The thrombin-sensitive stretch occupies residues 59-87 (CLGSFRAKLFTATRRSANGYPDLRSCVNA). The EGF-like 1 domain occupies 88-126 (IPDQCNPLPCSEEGYLNCKDGQATFTCICKPGWQGEKCE). Cystine bridges form between Cys92–Cys105, Cys97–Cys114, Cys116–Cys125, Cys132–Cys146, Cys142–Cys155, Cys157–Cys170, Cys176–Cys188, Cys183–Cys197, Cys199–Cys212, Cys218–Cys227, Cys223–Cys236, Cys238–Cys253, and Cys420–Cys446. At Asp107 the chain carries (3R)-3-hydroxyaspartate. In terms of domain architecture, EGF-like 2; calcium-binding spans 128 to 171 (DINECKDPTNINGGCSQICDNTAGSYHCSCKSGFVMLANEKDCK). Positions 172–213 (DMDECSVKPSVCGTAVCKNTPGDFECECSEGYRYNPTAKSCE) constitute an EGF-like 3; calcium-binding domain. Positions 214 to 254 (DIDECSENMCAQLCVNYPGGYSCYCDGKKGFKLAQDKKSCE) constitute an EGF-like 4; calcium-binding domain. 2 Laminin G-like domains span residues 270-446 (LLYL…KKHC) and 455-636 (YYPG…AHSC). Residues Asn470 and Asn480 are each glycosylated (N-linked (GlcNAc...) asparagine). A disulfide bond links Cys609 and Cys636.

In terms of assembly, interacts with C4b-binding protein, a regulator of the complex system. In rabbit plasma however, protein S appears to be present only in free form. Post-translationally, the iron and 2-oxoglutarate dependent 3-hydroxylation of aspartate and asparagine is (R) stereospecific within EGF domains. In terms of tissue distribution, plasma.

The protein localises to the secreted. Functionally, anticoagulant plasma protein; it is a cofactor to activated protein C in the degradation of coagulation factors Va and VIIIa. It helps to prevent coagulation and stimulating fibrinolysis. The chain is Vitamin K-dependent protein S (PROS1) from Oryctolagus cuniculus (Rabbit).